Here is a 615-residue protein sequence, read N- to C-terminus: UvrABC system protein C (615 aa).

Residues 12–91 enclose the GIY-YIG domain; the sequence is EKPGVYIMKD…IKKYKPKYNV (80 aa). Residues 203–238 form the UVR domain; it reads DWLIQKLKEDMKKAAEELRFEEAARIRDQIFAIERT.

This sequence belongs to the UvrC family. As to quaternary structure, interacts with UvrB in an incision complex.

It localises to the cytoplasm. Functionally, the UvrABC repair system catalyzes the recognition and processing of DNA lesions. UvrC both incises the 5' and 3' sides of the lesion. The N-terminal half is responsible for the 3' incision and the C-terminal half is responsible for the 5' incision. This Thermoanaerobacter pseudethanolicus (strain ATCC 33223 / 39E) (Clostridium thermohydrosulfuricum) protein is UvrABC system protein C.